A 381-amino-acid chain; its full sequence is 1-deoxy-D-xylulose 5-phosphate reductoisomerase (381 aa).

NADPH-binding residues include Thr11, Gly12, Ser13, Ile14, Asn37, and Asn121. Lys122 is a binding site for 1-deoxy-D-xylulose 5-phosphate. Residue Glu123 coordinates NADPH. Asp147 is a Mn(2+) binding site. Ser148, Glu149, Ser173, and His196 together coordinate 1-deoxy-D-xylulose 5-phosphate. Glu149 contacts Mn(2+). Gly202 serves as a coordination point for NADPH. 4 residues coordinate 1-deoxy-D-xylulose 5-phosphate: Ser209, Asn214, Lys215, and Glu218. Glu218 contacts Mn(2+).

The protein belongs to the DXR family. Mg(2+) is required as a cofactor. It depends on Mn(2+) as a cofactor.

The enzyme catalyses 2-C-methyl-D-erythritol 4-phosphate + NADP(+) = 1-deoxy-D-xylulose 5-phosphate + NADPH + H(+). Its pathway is isoprenoid biosynthesis; isopentenyl diphosphate biosynthesis via DXP pathway; isopentenyl diphosphate from 1-deoxy-D-xylulose 5-phosphate: step 1/6. Functionally, catalyzes the NADPH-dependent rearrangement and reduction of 1-deoxy-D-xylulose-5-phosphate (DXP) to 2-C-methyl-D-erythritol 4-phosphate (MEP). The sequence is that of 1-deoxy-D-xylulose 5-phosphate reductoisomerase from Ruminiclostridium cellulolyticum (strain ATCC 35319 / DSM 5812 / JCM 6584 / H10) (Clostridium cellulolyticum).